We begin with the raw amino-acid sequence, 339 residues long: DNA-directed RNA polymerase subunit alpha (339 aa).

An alpha N-terminal domain (alpha-NTD) region spans residues 1–238; the sequence is MVDPIVTKNW…EQLSIFINFD (238 aa). Positions 255–339 are alpha C-terminal domain (alpha-CTD); it reads LNENLFRSVD…KAAPQGAPKV (85 aa).

Belongs to the RNA polymerase alpha chain family. Homodimer. The RNAP catalytic core consists of 2 alpha, 1 beta, 1 beta' and 1 omega subunit. When a sigma factor is associated with the core the holoenzyme is formed, which can initiate transcription.

The catalysed reaction is RNA(n) + a ribonucleoside 5'-triphosphate = RNA(n+1) + diphosphate. Its function is as follows. DNA-dependent RNA polymerase catalyzes the transcription of DNA into RNA using the four ribonucleoside triphosphates as substrates. This Anaeromyxobacter sp. (strain Fw109-5) protein is DNA-directed RNA polymerase subunit alpha.